The sequence spans 224 residues: MDQFIKQDETGDLIETGMNVANHFLSAPIQGTNSLSKASIIPGVAPVLIGNPEQKNIQHPTASHQGSKSKGRGSGVRSIIVPPSEAGNGGTQIPEPLFAQTGQGGIVTTVYQDPTIQPTGSYRSVELTKIGKERMINRFVEKPRISTPVTEFKRGAGSGCSRPDNPRGGHRREWSLSWVQGEVRVFEWCNPICSPITAAARFHSCKCGNCPAKCDQCERDYGPP.

The segment covering 54–65 (QKNIQHPTASHQ) has biased composition (polar residues). Disordered stretches follow at residues 54–94 (QKNI…TQIP) and 150–172 (TEFK…GHRR). The Zn(2+) site is built by histidine 170, cysteine 189, cysteine 193, cysteine 205, cysteine 207, cysteine 210, cysteine 214, and cysteine 217.

The protein belongs to the paramyxoviruses V protein family. As to quaternary structure, interacts with host IFIH1/MDA5 and DHX58/LGP2. Forms with host DDB1, CUL4A, STAT1, STAT2 and STAT3 the mumps virus V-dependent complex (VDC).

It is found in the virion. Its subcellular location is the host cytoplasm. In terms of biological role, plays an essential role in the inhibition of host immune response. Prevents the establishment of cellular antiviral state by blocking interferon-alpha/beta (IFN-alpha/beta) production and signaling pathway. Interacts with host IFIH1/MDA5 and DHX58/LGP2 to inhibit the transduction pathway involved in the activation of IFN-beta promoter, thus protecting the virus against cell antiviral state. Blocks the type I and II interferon signaling pathways by interacting with host STAT1, STAT2 and STAT3, and mediating their ubiquitination and subsequent proteasomal degradation. The protein is Non-structural protein V of Homo sapiens (Human).